The chain runs to 606 residues: Ectonucleoside triphosphate diphosphohydrolase 7 (606 aa).

Over 1–28 (MARISFSYLCPASWYFTVPTVSPFLRQR) the chain is Cytoplasmic. Residues 29–49 (VAFLGLFFIPCVLLLLLIMDL) form a helical membrane-spanning segment. The Vesicular segment spans residues 50–548 (RHWATSLPRD…PAHGSWLRLS (499 aa)). Glu-217 acts as the Proton acceptor in catalysis. N-linked (GlcNAc...) asparagine glycosylation is present at Asn-330. The cysteines at positions 448 and 477 are disulfide-linked. The chain crosses the membrane as a helical span at residues 549–569 (FVYNHYLFFACTLVVLLAIVL). Residues 570 to 606 (YLLRIHRIHRRQTRASAPLDLLWIEQVVPMIGVQVGP) are Cytoplasmic-facing.

The protein belongs to the GDA1/CD39 NTPase family. Ca(2+) is required as a cofactor. Requires Mg(2+) as cofactor. Widely expressed. Expressed at high level in brain, kidney, liver, testis and small intestin. Weakly expressed in lung, thymus and heart.

It is found in the cytoplasmic vesicle membrane. It carries out the reaction a ribonucleoside 5'-triphosphate + H2O = a ribonucleoside 5'-diphosphate + phosphate + H(+). The enzyme catalyses UTP + H2O = UDP + phosphate + H(+). It catalyses the reaction GTP + H2O = GDP + phosphate + H(+). The catalysed reaction is CTP + H2O = CDP + phosphate + H(+). It carries out the reaction ATP + H2O = ADP + phosphate + H(+). Functionally, catalyzes the hydrolysis of nucleoside triphosphates and diphosphates in a calcium- or magnesium-dependent manner. Preferentially hydrolyzes nucleoside 5'-triphosphates, with substrate preference for UTP &gt; GTP &gt; CTP. Hydrolyzes nucleoside diphosphates only to a minor extent. In contrast to its human ortholog is able to hydrolyze ATP. In the epithelial cells of small intestine controls luminal ATP levels, therefore regulating Th17-cell development. In Mus musculus (Mouse), this protein is Ectonucleoside triphosphate diphosphohydrolase 7 (Entpd7).